We begin with the raw amino-acid sequence, 759 residues long: MAKSLLLVLCFALVTTLGWGYSAPPTGTTEPPDVQTVAPTEDETLQNEADNQENVLSQLLGDYDKVKAVSEGSDCQCKCVVRPLGRDACQRVNAGTSRKEDFYTVETITSGPSCKCACVAPPSALNPCEGDFRLQKLREADSRDLKLSTIIDMLEGAFYGLDLLKLHSVTTKLVGRVDKLEEEISKNLTKENEQIREDVEEIRTEMNKRGKENCSNNILDSIPDIRSALQRDAAAAYTHPEYEERFLQEETVSQQIKSIKLLQTRPLAPPEVVKPQRPLQRQVHLRGRPASRPTVIRGITYYKAKDPEEENDIEEHQDEFFSGEHGMDLLIEDQLLRHNQLLTSATRRPAATGRSAAVTADAGTTSAGTPTTALPSARLPASTAAPSTPDPAVSASVEQFSTPLPTTSVSPDPTEEAVPTPFTQVPATTVAHTATQQPPASAPPSAAPEDAFVEATHTAPVPPPPVRTDSPGKDSTARQGTVPPGPTLSPEEEDDIRNVIGRCKDTLSTITGPITQNTYGRNEGAWMKDPLAKDERIYVTNYYYGNTLVEFRNLENFKQGRWSNSYKLPYSWIGTGHVVYNGAFYYNRAFTRNIIKYDLKQRYVAAWAMLHDVAYEEATPWRWQGHSDVDFAVDENGLWLIYPALDDEGFSQEVIVLSKLNAVDLSTQKETTWRTGLRRNLYGNCFVICGVLYAVDSHNQRNANISYAFDTHTNTQIVPRLLFENEYSYTTQIDYNPKDRLLYAWDNGHQVTYHVIFAY.

The first 20 residues, 1 to 20, serve as a signal peptide directing secretion; sequence MAKSLLLVLCFALVTTLGWG. Coiled coils occupy residues 40–68 and 179–209; these read TEDE…KVKA and KLEE…MNKR. Residues Asn187 and Asn213 are each glycosylated (N-linked (GlcNAc...) asparagine). Disordered regions lie at residues 346–396 and 456–494; these read TRRP…VSAS and THTA…EEED. Over residues 356-396 the composition is skewed to low complexity; sequence AAVTADAGTTSAGTPTTALPSARLPASTAAPSTPDPAVSAS. In terms of domain architecture, Olfactomedin-like spans 502–759; it reads RCKDTLSTIT…QVTYHVIFAY (258 aa). Cys503 and Cys689 form a disulfide bridge. The N-linked (GlcNAc...) asparagine glycan is linked to Asn704.

Homodimer. Binds to heparin and chondroitin sulfate E. O-glycosylated and N-glycosylated.

The protein localises to the secreted. In Bos taurus (Bovine), this protein is Olfactomedin-like protein 2B (OLFML2B).